Here is a 179-residue protein sequence, read N- to C-terminus: MSRIGKNPIPIPDKVAVTLDGLAVSVKGPKGELSRTLPEGVSVSQVENTIVVTPTSQKRKSRERHGLCRSLVANMVEGVSKGYTRKLELIGVGSRAQVKGKKLVVSAGFSHPVEMDPPEGVTFAVENNTNVTVSGADKELVGNEAAKIRAIRPPEPYKGKGIRYEGERILRKAGKSGKK.

This sequence belongs to the universal ribosomal protein uL6 family. In terms of assembly, part of the 50S ribosomal subunit.

This protein binds to the 23S rRNA, and is important in its secondary structure. It is located near the subunit interface in the base of the L7/L12 stalk, and near the tRNA binding site of the peptidyltransferase center. This is Large ribosomal subunit protein uL6 from Prochlorococcus marinus (strain MIT 9313).